The following is a 393-amino-acid chain: Flavohemoprotein (393 aa).

Positions 1 to 139 constitute a Globin domain; it reads MLSAEHRAIV…LADLLIGLEE (139 aa). His-85 lines the heme b pocket. Catalysis depends on charge relay system residues Tyr-95 and Glu-138. The segment at 150-393 is reductase; sequence GGWRGTRAFV…EFFGPASALD (244 aa). In terms of domain architecture, FAD-binding FR-type spans 153 to 256; that stretch reads RGTRAFVVAR…LTPSGDFTLE (104 aa). FAD-binding positions include Tyr-191 and 205 to 208; that span reads RNYS. 268–273 is an NADP(+) binding site; sequence GVGITP. 385 to 388 contacts FAD; sequence FFGP.

Belongs to the globin family. Two-domain flavohemoproteins subfamily. This sequence in the C-terminal section; belongs to the flavoprotein pyridine nucleotide cytochrome reductase family. Heme b serves as cofactor. Requires FAD as cofactor.

It catalyses the reaction 2 nitric oxide + NADPH + 2 O2 = 2 nitrate + NADP(+) + H(+). It carries out the reaction 2 nitric oxide + NADH + 2 O2 = 2 nitrate + NAD(+) + H(+). Is involved in NO detoxification in an aerobic process, termed nitric oxide dioxygenase (NOD) reaction that utilizes O(2) and NAD(P)H to convert NO to nitrate, which protects the bacterium from various noxious nitrogen compounds. Therefore, plays a central role in the inducible response to nitrosative stress. This chain is Flavohemoprotein, found in Burkholderia sp. (strain TH2).